The following is a 476-amino-acid chain: Protein DETOXIFICATION 4 (476 aa).

The next 12 membrane-spanning stretches (helical) occupy residues 35 to 55, 66 to 86, 117 to 137, 154 to 174, 176 to 196, 208 to 228, 260 to 280, 289 to 309, 332 to 352, 370 to 390, 408 to 428, and 433 to 453; these read AVPMATVTIAQYLLPVISVMV, GVALATSFTNVSGFSIMFGLV, IPICVLISILWIYMEKLLISL, LIPTLFAHAIVLPLTRFLLAQ, LVLPLLYFALTTLLFHIAVCW, GAALAISVSFWFFAMTLSCYV, AAMLCLEWWLFELLILCSGLL, VLSICLTTATLHYVIPVGVAA, LAGLCLWLVESSFFSILLFAF, VADLSPLLCLSFVLDGFTAVL, VVAYYLVGAPVGIYLAFSCEL, and LWCGVVVGSAVQAIILAIVTA.

Belongs to the multi antimicrobial extrusion (MATE) (TC 2.A.66.1) family.

The protein resides in the membrane. The protein is Protein DETOXIFICATION 4 of Arabidopsis thaliana (Mouse-ear cress).